The sequence spans 356 residues: GTPase Obg (356 aa).

One can recognise an Obg domain in the interval 1–159 (MKFIDRVKIH…RWLRLELKLL (159 aa)). An OBG-type G domain is found at 160 to 331 (ADVGLLGMPN…LVAEVARELE (172 aa)). GTP contacts are provided by residues 166–173 (GMPNAGKS), 191–195 (FTTLV), 213–216 (DIPG), 283–286 (SKID), and 312–314 (SAV). Mg(2+) contacts are provided by Ser173 and Thr193.

Belongs to the TRAFAC class OBG-HflX-like GTPase superfamily. OBG GTPase family. In terms of assembly, monomer. Requires Mg(2+) as cofactor.

It localises to the cytoplasm. An essential GTPase which binds GTP, GDP and possibly (p)ppGpp with moderate affinity, with high nucleotide exchange rates and a fairly low GTP hydrolysis rate. Plays a role in control of the cell cycle, stress response, ribosome biogenesis and in those bacteria that undergo differentiation, in morphogenesis control. The protein is GTPase Obg of Syntrophotalea carbinolica (strain DSM 2380 / NBRC 103641 / GraBd1) (Pelobacter carbinolicus).